We begin with the raw amino-acid sequence, 150 residues long: Small ribosomal subunit protein uS11 (150 aa).

The protein belongs to the universal ribosomal protein uS11 family. In terms of assembly, part of the 30S ribosomal subunit. Interacts with proteins S7 and S18. Binds to IF-3.

Located on the platform of the 30S subunit, it bridges several disparate RNA helices of the 16S rRNA. Forms part of the Shine-Dalgarno cleft in the 70S ribosome. This is Small ribosomal subunit protein uS11 from Pelagibacter ubique (strain HTCC1062).